Reading from the N-terminus, the 341-residue chain is Ketol-acid reductoisomerase (NADP(+)) (341 aa).

The KARI N-terminal Rossmann domain maps to 2–182; it reads TDIVYDKDAD…GGLRAGGIRT (181 aa). NADP(+)-binding positions include 25 to 28, Lys-48, Ser-51, Ser-53, and 83 to 86; these read YGSQ and DQHQ. The active site involves His-108. Gly-134 lines the NADP(+) pocket. The 146-residue stretch at 183–328 folds into the KARI C-terminal knotted domain; the sequence is TFTEETETDL…RELRKLFAWN (146 aa). Positions 191, 195, 227, and 231 each coordinate Mg(2+). Ser-252 provides a ligand contact to substrate.

It belongs to the ketol-acid reductoisomerase family. Mg(2+) is required as a cofactor.

It catalyses the reaction (2R)-2,3-dihydroxy-3-methylbutanoate + NADP(+) = (2S)-2-acetolactate + NADPH + H(+). The catalysed reaction is (2R,3R)-2,3-dihydroxy-3-methylpentanoate + NADP(+) = (S)-2-ethyl-2-hydroxy-3-oxobutanoate + NADPH + H(+). It functions in the pathway amino-acid biosynthesis; L-isoleucine biosynthesis; L-isoleucine from 2-oxobutanoate: step 2/4. Its pathway is amino-acid biosynthesis; L-valine biosynthesis; L-valine from pyruvate: step 2/4. Involved in the biosynthesis of branched-chain amino acids (BCAA). Catalyzes an alkyl-migration followed by a ketol-acid reduction of (S)-2-acetolactate (S2AL) to yield (R)-2,3-dihydroxy-isovalerate. In the isomerase reaction, S2AL is rearranged via a Mg-dependent methyl migration to produce 3-hydroxy-3-methyl-2-ketobutyrate (HMKB). In the reductase reaction, this 2-ketoacid undergoes a metal-dependent reduction by NADPH to yield (R)-2,3-dihydroxy-isovalerate. This chain is Ketol-acid reductoisomerase (NADP(+)), found in Clavibacter sepedonicus (Clavibacter michiganensis subsp. sepedonicus).